The primary structure comprises 417 residues: UDP-N-acetylglucosamine 1-carboxyvinyltransferase (417 aa).

22–23 (KN) provides a ligand contact to phosphoenolpyruvate. R92 is a UDP-N-acetyl-alpha-D-glucosamine binding site. The Proton donor role is filled by C116. A 2-(S-cysteinyl)pyruvic acid O-phosphothioketal modification is found at C116. D304 and I326 together coordinate UDP-N-acetyl-alpha-D-glucosamine.

Belongs to the EPSP synthase family. MurA subfamily.

It is found in the cytoplasm. It catalyses the reaction phosphoenolpyruvate + UDP-N-acetyl-alpha-D-glucosamine = UDP-N-acetyl-3-O-(1-carboxyvinyl)-alpha-D-glucosamine + phosphate. Its pathway is cell wall biogenesis; peptidoglycan biosynthesis. Its function is as follows. Cell wall formation. Adds enolpyruvyl to UDP-N-acetylglucosamine. This chain is UDP-N-acetylglucosamine 1-carboxyvinyltransferase, found in Geobacter sulfurreducens (strain ATCC 51573 / DSM 12127 / PCA).